A 266-amino-acid chain; its full sequence is Vesicle-associated protein 4-1 (266 aa).

The tract at residues 28-57 (STTSSSSTQNPNQNYRSRHGNRNTDISAVS) is disordered. The MSP domain maps to 76 to 199 (RLRLDPSSYL…VEQVLRVIFI (124 aa)). The stretch at 200–228 (DADRPSAALEKLKRQLDEAEAAVEARKKP) forms a coiled coil. Basic and acidic residues predominate over residues 219–229 (EAAVEARKKPP). Residues 219-239 (EAAVEARKKPPPETGPRVVGE) are disordered. S264 is subject to Phosphoserine.

It belongs to the VAMP-associated protein (VAP) (TC 9.B.17) family.

In terms of biological role, may play a role in vesicle trafficking. The protein is Vesicle-associated protein 4-1 (PVA41) of Arabidopsis thaliana (Mouse-ear cress).